The primary structure comprises 438 residues: Protein pop-1 (438 aa).

Residues 1–39 (MMADEELGDEVKVFRRDEDADDDPMISGETSEQQLADDK) are disordered. The sufficient for interaction with beta-catenin/sys-1 stretch occupies residues 1–45 (MMADEELGDEVKVFRRDEDADDDPMISGETSEQQLADDKKEAVME). The span at 9–18 (DEVKVFRRDE) shows a compositional bias: basic and acidic residues. The involved in nuclear asymmetry stretch occupies residues 88–130 (AALPMFMPLFMNPYAAALRSPSLMFPMGAMSPTFPMFPPSPVY). A phosphoserine; by LIT1 mark is found at serine 118 and serine 127. The segment at residues 192–262 (VKKPLNAFMW…THKERYPEWS (71 aa)) is a DNA-binding region (HMG box). Positions 250 to 263 (DKETHKERYPEWSA) are enriched in basic and acidic residues. Disordered regions lie at residues 250–288 (DKET…ENND), 318–351 (TDRS…PKAN), and 378–438 (TTGA…MCTI). A compositionally biased stretch (basic residues) spans 270-279 (NKKKTKKRRD). Composition is skewed to polar residues over residues 324–339 (SDIT…SGAY) and 378–395 (TTGA…SSAG). Over residues 406-418 (SESDVEEEEDEQI) the composition is skewed to acidic residues.

This sequence belongs to the TCF/LEF family. In terms of assembly, interacts (via N-terminal region) with beta-catenin homolog sys-1. Interacts with hda-1. Interacts with bar-1. Interacts with par-5; the interaction is direct and is enhanced by lit-1-mediated pop-1 phosphorylation. The interaction also leads to the subsequent nuclear export of pop-1. Interacts (when phosphorylated on Ser-118 and Ser-127) with lit-1; the interaction is dependent on the beta-catenin-lit-1 complex. Interacts with wrm-1. Interacts with homeobox protein egl-5. Interacts with zinc finger transcription factor ref-2; the interaction is direct and facilitates transcriptional activation; transcription may be repressed by beta-catenin/sys-1. Phosphorylated on Ser-118 and Ser-127 by lit-1 in the beta-catenin-lit-1 complex. Phosphorylation promotes the interaction of pop-1 and par-5 and the subsequent translocation of pop-1 from the nucleus to the cytoplasm.

It localises to the nucleus. The protein localises to the cytoplasm. Its function is as follows. Transcription factor. Part of the Wnt signaling asymmetry pathway. Binds to the consensus sequence, 5'-(C/T)TTTG(A/T)(A/T)(G/C)-3'. Activates or represses target gene expression, depending on upstream Wnt signals and interactions with transcription co-regulators, such as beta-catenin/sys-1 or zinc finger transcription factor ref-2. Essential for the specification of the mesodermal and endodermal cell fates in early embryos. Required in many asymmetrical cell divisions in the early embryo and during larval development. Reciprocal distribution patterns of sys-1 and pop-1 in the daughters of anterior-posterior cell divisions functions in specifying cell fate; a higher sys-1 to pop-1 ratio promotes the posterior cell fate, whereas a low sys-1 to pop-1 ratio promotes the anterior fate. Involved in modulating nuclear localization or nuclear retention of sys-1. Involved in the terminal asymmetrical division of many embryonic neuroblasts; for example in the SMDD/AIY neuron lineage. In complex with ref-2, positively modulates expression of LIM/homeobox protein ttx-3 in anterior daughter cells of the SMDD/AIY lineage. Required for asymmetrical division of somatic gonadal precursor descendants which initiate axis formation required to control organ shape. Similarly, involved in asymmetrical division of seam cells, a stem cell-like lineage. Represses expression of target genes via its interaction with hda-1 histone deacetylase. Required for specification of the M lineage-derived coelomocyte and sex myoblast fate. Regulates coelomocyte fate by positively regulating proliferation and ceh-34 and possibly eya-1 expression in M.dlpa and M.drpa precursors. In Caenorhabditis elegans, this protein is Protein pop-1.